Here is a 100-residue protein sequence, read N- to C-terminus: ATP synthase subunit c (100 aa).

The next 2 membrane-spanning stretches (helical) occupy residues 26 to 46 (FSVV…AIGM) and 71 to 91 (MFIA…IALI).

Belongs to the ATPase C chain family. As to quaternary structure, F-type ATPases have 2 components, F(1) - the catalytic core - and F(0) - the membrane proton channel. F(1) has five subunits: alpha(3), beta(3), gamma(1), delta(1), epsilon(1). F(0) has three main subunits: a(1), b(2) and c(10-14). The alpha and beta chains form an alternating ring which encloses part of the gamma chain. F(1) is attached to F(0) by a central stalk formed by the gamma and epsilon chains, while a peripheral stalk is formed by the delta and b chains.

Its subcellular location is the cell inner membrane. Its function is as follows. F(1)F(0) ATP synthase produces ATP from ADP in the presence of a proton or sodium gradient. F-type ATPases consist of two structural domains, F(1) containing the extramembraneous catalytic core and F(0) containing the membrane proton channel, linked together by a central stalk and a peripheral stalk. During catalysis, ATP synthesis in the catalytic domain of F(1) is coupled via a rotary mechanism of the central stalk subunits to proton translocation. Key component of the F(0) channel; it plays a direct role in translocation across the membrane. A homomeric c-ring of between 10-14 subunits forms the central stalk rotor element with the F(1) delta and epsilon subunits. The sequence is that of ATP synthase subunit c from Campylobacter fetus subsp. fetus (strain 82-40).